A 219-amino-acid polypeptide reads, in one-letter code: Regulatory protein YeiL (219 aa).

Positions 19–97 (RLFHFLARDY…IEECWCLALP (79 aa)) are sensory domain. Cysteine 68, cysteine 91, cysteine 93, and cysteine 116 together coordinate [4Fe-4S] cluster. Residues 111 to 131 (FLRKLCVTLSHKNYRNIVSLT) form a dimer interface region. The HTH crp-type domain occupies 136 to 199 (FPLVNRLAAF…KKGYLIKNRK (64 aa)). The H-T-H motif DNA-binding region spans 158 to 181 (KHTQAAEYLGVSYRHLLYVLAQFI).

In terms of assembly, homodimer. [4Fe-4S] cluster is required as a cofactor.

It is found in the cytoplasm. Transcription regulator involved in mid-term, stationary-phase viability under nitrogen starvation. Might control expression of the salvage pathways or in some other way repress the recycling of nucleobases to nucleic acids and enhance their use as general nitrogen sources during nitrogen-limited growth. This chain is Regulatory protein YeiL (yeiL), found in Escherichia coli O157:H7.